The primary structure comprises 139 residues: Glutamate mutase sigma subunit (139 aa).

In terms of domain architecture, B12-binding spans 4 to 139 (KIKLVLGVIG…DLHADFPDHA (136 aa)). Adenosylcob(III)alamin is bound by residues 14-18 (SDCHA), His-17, 62-64 (SSL), and 94-98 (NIVVG).

This sequence belongs to the methylaspartate mutase GlmS subunit family. In terms of assembly, heterotetramer composed of 2 epsilon subunits (GlmE) and 2 sigma subunits (GlmS). GlmE exists as a homodimer and GlmS as a monomer. Requires adenosylcob(III)alamin as cofactor.

The catalysed reaction is (2S,3S)-3-methyl-L-aspartate = L-glutamate. It participates in amino-acid degradation; L-glutamate degradation via mesaconate pathway; acetate and pyruvate from L-glutamate: step 1/4. Its function is as follows. Catalyzes the carbon skeleton rearrangement of L-glutamate to L-threo-3-methylaspartate ((2S,3S)-3-methylaspartate). This Treponema denticola (strain ATCC 35405 / DSM 14222 / CIP 103919 / JCM 8153 / KCTC 15104) protein is Glutamate mutase sigma subunit.